Here is a 366-residue protein sequence, read N- to C-terminus: NADH-quinone oxidoreductase subunit D (366 aa).

The protein belongs to the complex I 49 kDa subunit family. In terms of assembly, NDH-1 is composed of 14 different subunits. Subunits NuoB, C, D, E, F, and G constitute the peripheral sector of the complex.

The protein resides in the cell membrane. The catalysed reaction is a quinone + NADH + 5 H(+)(in) = a quinol + NAD(+) + 4 H(+)(out). Its function is as follows. NDH-1 shuttles electrons from NADH, via FMN and iron-sulfur (Fe-S) centers, to quinones in the respiratory chain. The immediate electron acceptor for the enzyme in this species is believed to be a menaquinone. Couples the redox reaction to proton translocation (for every two electrons transferred, four hydrogen ions are translocated across the cytoplasmic membrane), and thus conserves the redox energy in a proton gradient. The chain is NADH-quinone oxidoreductase subunit D from Bacillus thuringiensis subsp. konkukian (strain 97-27).